A 431-amino-acid chain; its full sequence is O-methyltransferase gliM (431 aa).

The stretch at 20–85 (EFKAIVNDLR…SMDKLQLQLV (66 aa)) forms a coiled coil. S-adenosyl-L-methionine-binding positions include Asp287 and 319 to 321 (GDF). The active-site Proton acceptor is His338.

It belongs to the class I-like SAM-binding methyltransferase superfamily. Cation-independent O-methyltransferase family. COMT subfamily.

It functions in the pathway mycotoxin biosynthesis. In terms of biological role, O-methyltransferase; part of the gene cluster that mediates the biosynthesis of gliotoxin, a member of the epipolythiodioxopiperazine (ETP) class of toxins characterized by a disulfide bridged cyclic dipeptide. The first step in gliotoxin biosynthesis is the condensation of serine and phenylalanine to form the cyclo-L-phenylalanyl-L-serine diketopiperazine (DKP) by the NRPS gliP. GliP is also able to produce the DKP cyclo-L-tryptophanyl-L-serine, suggesting that the substrate specificity of the first adenylation (A) domain in gliP is sufficiently relaxed to accommodate both L-Phe and L-Trp. The cytochrome P450 monooxygenase gliC has been shown to catalyze the subsequent hydroxylation of the alpha-carbon of L-Phe in cyclo-L-phenylalanyl-L-serine whereas the second cytochrome P450 enzyme, gliF, is presumably involved in the modification of the DKP side chain. The glutathione S-transferase (GST) gliG then forms a bis-glutathionylated biosynthetic intermediate which is responsible for the sulfurization of gliotoxin. This bis-glutathionylated intermediate is subsequently processed by the gamma-glutamyl cyclotransferase gliK to remove both gamma-glutamyl moieties. Subsequent processing via gliI yields a biosynthetic intermediate, which is N-methylated via the N-methyltransferase gliN, before the gliotoxin oxidoreductase gliT-mediated disulfide bridge closure. GliN-mediated amide methylation confers stability to ETP, damping the spontaneous formation of tri- and tetrasulfides. Intracellular dithiol gliotoxin oxidized by gliT is subsequently effluxed by gliA. Gliotoxin contributes to pathogenesis during invasive aspergillosis. In macrophages and neutrophils, gliotoxin showed inhibition of various different cell functions including cytokine production, antigen presentation, phagocytosis, and production of reactive oxygen species. The sequence is that of O-methyltransferase gliM from Aspergillus fumigatus (strain ATCC MYA-4609 / CBS 101355 / FGSC A1100 / Af293) (Neosartorya fumigata).